The following is a 404-amino-acid chain: Cysteine desulfurase IscS (404 aa).

Pyridoxal 5'-phosphate is bound by residues 75 to 76, N155, Q183, and 203 to 205; these read AT and SSH. K206 is modified (N6-(pyridoxal phosphate)lysine). T243 lines the pyridoxal 5'-phosphate pocket. The active-site Cysteine persulfide intermediate is the C328. Residue C328 participates in [2Fe-2S] cluster binding.

It belongs to the class-V pyridoxal-phosphate-dependent aminotransferase family. NifS/IscS subfamily. Homodimer. Forms a heterotetramer with IscU, interacts with other sulfur acceptors. Pyridoxal 5'-phosphate serves as cofactor.

It localises to the cytoplasm. The catalysed reaction is (sulfur carrier)-H + L-cysteine = (sulfur carrier)-SH + L-alanine. It participates in cofactor biosynthesis; iron-sulfur cluster biosynthesis. Its function is as follows. Master enzyme that delivers sulfur to a number of partners involved in Fe-S cluster assembly, tRNA modification or cofactor biosynthesis. Catalyzes the removal of elemental sulfur atoms from cysteine to produce alanine. Functions as a sulfur delivery protein for Fe-S cluster synthesis onto IscU, an Fe-S scaffold assembly protein, as well as other S acceptor proteins. The polypeptide is Cysteine desulfurase IscS (Haemophilus influenzae (strain PittGG)).